The primary structure comprises 1372 residues: DNA-directed RNA polymerase subunit beta' (1372 aa).

Zn(2+)-binding residues include Cys69, Cys71, Cys84, and Cys87. 3 residues coordinate Mg(2+): Asp460, Asp462, and Asp464. Cys808, Cys882, Cys889, and Cys892 together coordinate Zn(2+).

Belongs to the RNA polymerase beta' chain family. As to quaternary structure, the RNAP catalytic core consists of 2 alpha, 1 beta, 1 beta' and 1 omega subunit. When a sigma factor is associated with the core the holoenzyme is formed, which can initiate transcription. Mg(2+) is required as a cofactor. Requires Zn(2+) as cofactor.

It catalyses the reaction RNA(n) + a ribonucleoside 5'-triphosphate = RNA(n+1) + diphosphate. In terms of biological role, DNA-dependent RNA polymerase catalyzes the transcription of DNA into RNA using the four ribonucleoside triphosphates as substrates. The protein is DNA-directed RNA polymerase subunit beta' of Rickettsia rickettsii (strain Iowa).